The chain runs to 333 residues: Phospholipid phosphatase-related protein type 1 (333 aa).

The next 3 membrane-spanning stretches (helical) occupy residues 12–32 (IIPCFIFVELVIMAGTVLLAY), 66–86 (FIQPLILYCVVAAAPTAIIFV), and 126–146 (FIGVFAFGLFATDIFVNAGQV). N-linked (GlcNAc...) asparagine glycosylation is present at N162. 3 helical membrane passes run 200–217 (ASLSVYSAVYVTMYITST), 223–243 (SRLAKPVLCLGLLCAAFLTGL), and 256–276 (VVAGFILGSSIALFLGICVVN).

This sequence belongs to the PA-phosphatase related phosphoesterase family.

It is found in the cell membrane. It localises to the cell projection. Its subcellular location is the neuron projection. May play a role in neurite outgrowth and neurogenesis. This is Phospholipid phosphatase-related protein type 1 (plppr1) from Danio rerio (Zebrafish).